The chain runs to 571 residues: Arginine--tRNA ligase (571 aa).

Positions 122 to 132 (PNIAKEMHVGH) match the 'HIGH' region motif.

This sequence belongs to the class-I aminoacyl-tRNA synthetase family. In terms of assembly, monomer.

The protein localises to the cytoplasm. The catalysed reaction is tRNA(Arg) + L-arginine + ATP = L-arginyl-tRNA(Arg) + AMP + diphosphate. This is Arginine--tRNA ligase from Buchnera aphidicola subsp. Cinara cedri (strain Cc).